The chain runs to 327 residues: GMP reductase (327 aa).

The active-site Thioimidate intermediate is the C176. 205 to 228 (IIADGGIRTHGDIAKSIRFGASMV) is an NADP(+) binding site.

It belongs to the IMPDH/GMPR family. GuaC type 2 subfamily.

The enzyme catalyses IMP + NH4(+) + NADP(+) = GMP + NADPH + 2 H(+). Catalyzes the irreversible NADPH-dependent deamination of GMP to IMP. It functions in the conversion of nucleobase, nucleoside and nucleotide derivatives of G to A nucleotides, and in maintaining the intracellular balance of A and G nucleotides. This Streptococcus pyogenes serotype M28 (strain MGAS6180) protein is GMP reductase.